A 535-amino-acid polypeptide reads, in one-letter code: Ribonuclease Y (535 aa).

The helical transmembrane segment at 4-24 (IILLIVSALIGLILGYALISI) threads the bilayer. The segment at 118–141 (ENLSSKEKVLDSKEQSLTDKSKHI) is disordered. One can recognise a KH domain in the interval 225–285 (TITSVHLPDD…IRREIARMTL (61 aa)). One can recognise an HD domain in the interval 351-444 (VLRHSVEVGK…VAAADALSSA (94 aa)).

Belongs to the RNase Y family.

Its subcellular location is the cell membrane. Functionally, endoribonuclease that initiates mRNA decay. This is Ribonuclease Y from Streptococcus pyogenes serotype M1.